The sequence spans 400 residues: MTASSNDDDLIFECYSDPELKRWTHLANAKAWKGILTVQQYADREQLLGSSEISQKNKSNEMMTKYPKSYQWLGQKYFVLKDRSLPDNGKFSQVVSSCETLNRIGYCIHPGSNGKIEPALIVCIGGVFTFENHRGKGYAKKMIIKLNEFYDKIRDDANTVLELKNLVINLYSEVGEYYSALGYESMHVPLHRISKLDELTERYCGEDDDHDGKYLGFDDYRGLVGLHETQFKESLLSLHKENPEKFVFTVAPDFDIFTWFQYRDLFIMNKSGRKAQQNLFFGYALSDNSHIIWHHNWNGDSLIIVKIHIPEETFQRKELKLKKLLRKAIEETKLHGLQELEFWDEEIPIKKYPQLFQLLTELENESKVFSENGSISAVRPPKGYTAEQVIWDNNTKFCWF.

This is an uncharacterized protein from Saccharomyces cerevisiae (strain ATCC 204508 / S288c) (Baker's yeast).